The chain runs to 207 residues: UPF0328 protein ECU02_1590/ECU04_0060/ECU08_2120 (207 aa).

Disordered regions lie at residues 1-154 (MPRP…HSHT) and 180-207 (GRLH…LATL). Composition is skewed to basic and acidic residues over residues 14–24 (DHPDFRSESSA) and 75–97 (HTEG…ETES). Composition is skewed to polar residues over residues 98 to 121 (PKPQ…SQNT) and 133 to 149 (SRPS…QSPH).

The protein belongs to the UPF0328 family.

In Encephalitozoon cuniculi (strain GB-M1) (Microsporidian parasite), this protein is UPF0328 protein ECU02_1590/ECU04_0060/ECU08_2120.